The primary structure comprises 274 residues: Phosphate import ATP-binding protein PstB (274 aa).

Over residues 1-11 (MSEISIATSVP) the composition is skewed to polar residues. The tract at residues 1–21 (MSEISIATSVPSGPGPLIGNQ) is disordered. An ABC transporter domain is found at 28–269 (VIVRDLNFYY…PNDRRTQDYI (242 aa)). Position 60–67 (60–67 (GPSGCGKS)) interacts with ATP.

Belongs to the ABC transporter superfamily. Phosphate importer (TC 3.A.1.7) family. The complex is composed of two ATP-binding proteins (PstB), two transmembrane proteins (PstC and PstA) and a solute-binding protein (PstS).

The protein resides in the cell inner membrane. It catalyses the reaction phosphate(out) + ATP + H2O = ADP + 2 phosphate(in) + H(+). Part of the ABC transporter complex PstSACB involved in phosphate import. Responsible for energy coupling to the transport system. This Rhodopseudomonas palustris (strain BisB5) protein is Phosphate import ATP-binding protein PstB.